A 175-amino-acid polypeptide reads, in one-letter code: 6,7-dimethyl-8-ribityllumazine synthase (175 aa).

5-amino-6-(D-ribitylamino)uracil-binding positions include F24, 58 to 60 (ALE), and 82 to 84 (AVI). 87–88 (ET) is a (2S)-2-hydroxy-3-oxobutyl phosphate binding site. The Proton donor role is filled by H90. Residue N115 coordinates 5-amino-6-(D-ribitylamino)uracil. (2S)-2-hydroxy-3-oxobutyl phosphate is bound at residue R129. A disordered region spans residues 151 to 175 (LEPEEDDEDEDEEDEDFDDEETDRR). The segment covering 152 to 175 (EPEEDDEDEDEEDEDFDDEETDRR) has biased composition (acidic residues).

This sequence belongs to the DMRL synthase family.

It carries out the reaction (2S)-2-hydroxy-3-oxobutyl phosphate + 5-amino-6-(D-ribitylamino)uracil = 6,7-dimethyl-8-(1-D-ribityl)lumazine + phosphate + 2 H2O + H(+). It functions in the pathway cofactor biosynthesis; riboflavin biosynthesis; riboflavin from 2-hydroxy-3-oxobutyl phosphate and 5-amino-6-(D-ribitylamino)uracil: step 1/2. In terms of biological role, catalyzes the formation of 6,7-dimethyl-8-ribityllumazine by condensation of 5-amino-6-(D-ribitylamino)uracil with 3,4-dihydroxy-2-butanone 4-phosphate. This is the penultimate step in the biosynthesis of riboflavin. This is 6,7-dimethyl-8-ribityllumazine synthase from Bordetella petrii (strain ATCC BAA-461 / DSM 12804 / CCUG 43448).